The chain runs to 1242 residues: Reverse gyrase 1 (1242 aa).

The RG N-terminal-type zinc-finger motif lies at 6–46; that stretch reads KVPPSIYTRSCPNCGGNISSQRLFNGSVCESCLKDDREFSN. Zn(2+) contacts are provided by cysteine 16, cysteine 19, cysteine 34, and cysteine 37. ATP is bound by residues glutamine 93 and 110–117; that span reads APPGLGKT. The Helicase ATP-binding domain occupies 97–298; the sequence is TIRFLRGESF…SLMGFRPGSS (202 aa). A DEAD box motif is present at residues 214–217; it reads DDVD. Residues 615–1242 form a topoisomerase I region; sequence LSVKTTLFIV…ELYNEIQTIS (628 aa). Residues 619–785 form the Toprim domain; sequence TTLFIVESPN…NIKRAEFHEV (167 aa). A Mg(2+)-binding site is contributed by glutamate 625. The RG C-terminal-type; atypical zinc finger occupies 703 to 731; it reads IKKCEKGHQIVKDLSQNKCPICGSRIVTD. Positions 706, 710, 721, and 724 each coordinate Zn(2+). Residue aspartate 754 participates in Mg(2+) binding. Residues 801–1242 enclose the Topo IA-type catalytic domain; sequence NDNLVKSQIV…ELYNEIQTIS (442 aa). Residue tyrosine 965 is the O-(5'-phospho-DNA)-tyrosine intermediate of the active site.

This sequence in the N-terminal section; belongs to the DEAD box helicase family. DDVD subfamily. It in the C-terminal section; belongs to the type IA topoisomerase family. In terms of assembly, monomer. Zn(2+) serves as cofactor. It depends on Mg(2+) as a cofactor.

It localises to the cytoplasm. It catalyses the reaction ATP + H2O = ADP + phosphate + H(+). Its activity is regulated as follows. At least one of the two reverse gyrase proteins is inhibited by actinomycin D. Highly sensitive to NaCl concentrations, maximal positive supercoiling is observed with 10 mM NaCl; as NaCl rises, supercoiling decreases. At 300 mM NaCl relaxes but does not introduce positive supercoils into negatively supercoiled substrate, at 400 mM NaCl does not relax DNA. Functionally, modifies the topological state of DNA by introducing positive supercoils in an ATP-dependent process. Increases the linking number in steps of +1. Involved in homeostatic control of DNA topology in balance with type II topoisomerase 6 (TopoVI); levels of TopoVI are constant at 80 and 88 degrees Celsius and TopoVI is probably less active at 88 degrees (characterized enzyme is from S.shibatae B12), so reverse gyrase mediates most of the fine-tuning of DNA topology. Changes the DNA linking number step-by-step in a distributive manner. At low protein to DNA ratios mostly relaxes negatively supercoiled substrate, as ratios rise more positive supercoils are introduced. At 90 degrees Celsius introduces 19 positive supercoils into pTZ18R DNA (probably 2860 bp), less than TopR2. Relaxes negatively supercoiled DNA in the absence of ATP. It cleaves transiently a single DNA strand and remains covalently bound to the 5' DNA end through a tyrosine residue. May be involved in DNA damage response. Its activity is inhibited by the DNA-binding protein 7d (Sso7d), suggesting that the Sso7d activity might counteract the overwinding effect of reverse gyrase. In terms of biological role, resolves 4-way Holliday junctions (HJ) with 20 bases in each arm in vitro, distorting the junction. Very high protein levels are required, but total enzyme content of the cell (there are 2 reverse gyrases in this organism) is estimated to be 20-200 molecules/cell. HJ resolution does not require either ATPase activity or the active tyrosine. The individual domains do not resolve HJs but do so when mixed. Also unwinds a fork substrate. Its function is as follows. There are 2 genes for this protein in the cell. During exponential growth this is the less expressed isoform (about 52 molecules per cell at 80 degrees Celsius, about 28 molecules at 88 degrees Celsius); this isoform is more active at higher temperature. Grows actively at both 80 and 88 degrees Celsius; survives a long exposure at 45 degrees Celsius without DNA replication or cell division occurring. Experiments using whole cell extracts do not distinguish which isoform is present, the results are probably a mixture of the two forms. This chain is Reverse gyrase 1, found in Saccharolobus solfataricus (strain ATCC 35092 / DSM 1617 / JCM 11322 / P2) (Sulfolobus solfataricus).